We begin with the raw amino-acid sequence, 234 residues long: Large ribosomal subunit protein uL1c (234 aa).

Belongs to the universal ribosomal protein uL1 family. In terms of assembly, part of the 50S ribosomal subunit.

The protein localises to the plastid. Its subcellular location is the chloroplast. Its function is as follows. Binds directly to 23S rRNA. Might be involved in E site tRNA release (Potential). This Guillardia theta (Cryptophyte) protein is Large ribosomal subunit protein uL1c (rpl1).